The primary structure comprises 458 residues: RuvB-like helicase 1 (458 aa).

Over residues Met1–Thr18 the composition is skewed to basic and acidic residues. Residues Met1 to Ala20 form a disordered region. Gly73–Thr80 lines the ATP pocket.

It belongs to the RuvB family. As to quaternary structure, may form heterododecamers with RVB2. Component of the SWR1 chromatin remodeling complex, the INO80 chromatin remodeling complex, and of the R2TP complex.

It localises to the nucleus. It carries out the reaction ATP + H2O = ADP + phosphate + H(+). Its function is as follows. DNA helicase which participates in several chromatin remodeling complexes, including the SWR1 and the INO80 complexes. The SWR1 complex mediates the ATP-dependent exchange of histone H2A for the H2A variant HZT1 leading to transcriptional regulation of selected genes by chromatin remodeling. The INO80 complex remodels chromatin by shifting nucleosomes and is involved in DNA repair. Also involved in pre-rRNA processing. This Candida albicans (strain SC5314 / ATCC MYA-2876) (Yeast) protein is RuvB-like helicase 1 (RVB1).